The sequence spans 151 residues: Putative pre-16S rRNA nuclease (151 aa).

The protein belongs to the YqgF nuclease family.

It localises to the cytoplasm. Its function is as follows. Could be a nuclease involved in processing of the 5'-end of pre-16S rRNA. The sequence is that of Putative pre-16S rRNA nuclease from Onion yellows phytoplasma (strain OY-M).